The following is a 255-amino-acid chain: Taurine import ATP-binding protein TauB (255 aa).

In terms of domain architecture, ABC transporter spans 2 to 229 (LQISHLYADY…RFVAGESSRS (228 aa)). Position 34 to 41 (34 to 41 (GPSGCGKT)) interacts with ATP.

Belongs to the ABC transporter superfamily. Taurine importer (TC 3.A.1.17.1) family. As to quaternary structure, the complex is composed of two ATP-binding proteins (TauB), two transmembrane proteins (TauC) and a solute-binding protein (TauA).

The protein localises to the cell inner membrane. The catalysed reaction is taurine(out) + ATP + H2O = taurine(in) + ADP + phosphate + H(+). Functionally, part of the ABC transporter complex TauABC involved in taurine import. Responsible for energy coupling to the transport system. This chain is Taurine import ATP-binding protein TauB, found in Shigella flexneri.